We begin with the raw amino-acid sequence, 195 residues long: Peptidyl-tRNA hydrolase (195 aa).

Y17 lines the tRNA pocket. H22 functions as the Proton acceptor in the catalytic mechanism. TRNA-binding residues include Y68, N70, and N116.

The protein belongs to the PTH family. Monomer.

Its subcellular location is the cytoplasm. It catalyses the reaction an N-acyl-L-alpha-aminoacyl-tRNA + H2O = an N-acyl-L-amino acid + a tRNA + H(+). Its function is as follows. Hydrolyzes ribosome-free peptidyl-tRNAs (with 1 or more amino acids incorporated), which drop off the ribosome during protein synthesis, or as a result of ribosome stalling. Functionally, catalyzes the release of premature peptidyl moieties from peptidyl-tRNA molecules trapped in stalled 50S ribosomal subunits, and thus maintains levels of free tRNAs and 50S ribosomes. The protein is Peptidyl-tRNA hydrolase of Shewanella frigidimarina (strain NCIMB 400).